The chain runs to 421 residues: MQSNDENIYFPANQYVNAGQYSPLQQSFSQNSQYDLFDGFAEFGFLEQVPATNMYSGSQSTQMEQNYLPNVNNSTRKRKAPGQNEQATVKRRQIGIEKWRLPSRSVVQPSADISDLRRPPISYVALCALACRNAPDMKITPAGVYAFVLHHWRYYRYANENWKNSVRHQLSSKEHFDEETFQPDPSNPTVRRKFYIVKNPNMIRQNLISDADFDFFRKDSRGIEFYQKMFAGQIGLPRSLFYQIIGNGIPFLAGPENSSMFYQLLGMGKVVGYLETRYFREHYRSEHAATEPKYEEDYANFTEKIPSNAENLMSYGAATERNFQKFDFTDEEIELFHLNISSYHSVQKTCKECNLPNWCTPSVGDVETYVFGRQVPMPVNTPVILQQFETVAEQEGIRNNPLEERKTTEDPRDISILEALA.

A DNA-binding region (fork-head) is located at residues R118 to K218.

It localises to the nucleus. Functionally, transcription factor. Regulates expression of a class of small RNAs, known as 21U-RNAs, perhaps acting redundantly with fkh-3 and fkh-5. The sequence is that of Forkhead box protein fkh-4 from Caenorhabditis elegans.